The primary structure comprises 235 residues: V-type proton ATPase subunit E2 (235 aa).

N-acetylmethionine is present on methionine 1. A coiled-coil region spans residues lysine 8–isoleucine 64.

This sequence belongs to the V-ATPase E subunit family. As to quaternary structure, V-ATPase is a heteromultimeric enzyme composed of a peripheral catalytic V1 complex (components A to H) attached to an integral membrane V0 proton pore complex (components: a, c, c'', d and e).

The protein resides in the vacuole membrane. Subunit of the peripheral V1 complex of vacuolar ATPase essential for assembly or catalytic function. V-ATPase is responsible for acidifying a variety of intracellular compartments in eukaryotic cells. In Arabidopsis thaliana (Mouse-ear cress), this protein is V-type proton ATPase subunit E2 (VHA-E2).